A 219-amino-acid polypeptide reads, in one-letter code: 2-hydroxy-3-keto-5-methylthiopentenyl-1-phosphate phosphatase (219 aa).

The protein belongs to the HAD-like hydrolase superfamily. MtnX family.

It carries out the reaction 2-hydroxy-5-methylsulfanyl-3-oxopent-1-enyl phosphate + H2O = 1,2-dihydroxy-5-(methylsulfanyl)pent-1-en-3-one + phosphate. The protein operates within amino-acid biosynthesis; L-methionine biosynthesis via salvage pathway; L-methionine from S-methyl-5-thio-alpha-D-ribose 1-phosphate: step 4/6. Functionally, dephosphorylates 2-hydroxy-3-keto-5-methylthiopentenyl-1-phosphate (HK-MTPenyl-1-P) yielding 1,2-dihydroxy-3-keto-5-methylthiopentene (DHK-MTPene). The polypeptide is 2-hydroxy-3-keto-5-methylthiopentenyl-1-phosphate phosphatase (Bacillus cereus (strain ATCC 10987 / NRS 248)).